A 285-amino-acid chain; its full sequence is 2-oxoglutarate synthase subunit KorB (285 aa).

In terms of assembly, heterotetramer of the KorA, KorB, KorC and KorD subunits.

The catalysed reaction is 2 oxidized [2Fe-2S]-[ferredoxin] + 2-oxoglutarate + CoA = succinyl-CoA + 2 reduced [2Fe-2S]-[ferredoxin] + CO2 + H(+). This chain is 2-oxoglutarate synthase subunit KorB (korB), found in Methanothermobacter marburgensis (strain ATCC BAA-927 / DSM 2133 / JCM 14651 / NBRC 100331 / OCM 82 / Marburg) (Methanobacterium thermoautotrophicum).